Here is a 587-residue protein sequence, read N- to C-terminus: Glutamine--tRNA ligase (587 aa).

The 'HIGH' region motif lies at 58–68 (PEPNGYLHIGH). Residues 59–61 (EPN) and 65–71 (HIGHAKS) contribute to the ATP site. Positions 91 and 240 each coordinate L-glutamine. ATP-binding positions include T259 and 294–295 (RL). The 'KMSKS' region signature appears at 301–305 (VTSKR).

It belongs to the class-I aminoacyl-tRNA synthetase family. Monomer.

It localises to the cytoplasm. The enzyme catalyses tRNA(Gln) + L-glutamine + ATP = L-glutaminyl-tRNA(Gln) + AMP + diphosphate. The polypeptide is Glutamine--tRNA ligase (Bordetella pertussis (strain Tohama I / ATCC BAA-589 / NCTC 13251)).